Consider the following 315-residue polypeptide: MAPENFTRVTEFILTGVSSCPELQIPLFLVFLVLYVLTMAGNLGIITLTSVDSRLQNPMYFFLRHLAIINLGNSTVIAPKMLMNFLVKKKTTSFYECATQLGGFLFFIVSEVMMLAVMAYDRYVAICNPLLYMVVVSRRLCLLLVSLTYLYGFSTAIVVSPCIFSVSYCSSNIINHFYCDIAPLLALSCSDTYIPETIVFISAATNLVFSMITVLVSYFNIVLSILRIRSPEGRKKAFSTCASHMIAVTVFYGTMLFMYLQPQTNHSLDTDKMASVFYTLVIPMLNPLIYSLRNNDVNVALKKFMENPCYSFKSM.

The Extracellular segment spans residues 1-25 (MAPENFTRVTEFILTGVSSCPELQI). Asparagine 5 carries an N-linked (GlcNAc...) asparagine glycan. Residues 26–46 (PLFLVFLVLYVLTMAGNLGII) traverse the membrane as a helical segment. At 47–54 (TLTSVDSR) the chain is on the cytoplasmic side. Residues 55-75 (LQNPMYFFLRHLAIINLGNST) traverse the membrane as a helical segment. Topologically, residues 76-99 (VIAPKMLMNFLVKKKTTSFYECAT) are extracellular. Residues cysteine 97 and cysteine 189 are joined by a disulfide bond. The chain crosses the membrane as a helical span at residues 100–120 (QLGGFLFFIVSEVMMLAVMAY). The Cytoplasmic portion of the chain corresponds to 121 to 139 (DRYVAICNPLLYMVVVSRR). Residues 140–160 (LCLLLVSLTYLYGFSTAIVVS) form a helical membrane-spanning segment. Residues 161 to 197 (PCIFSVSYCSSNIINHFYCDIAPLLALSCSDTYIPET) are Extracellular-facing. A helical membrane pass occupies residues 198-217 (IVFISAATNLVFSMITVLVS). Residues 218-237 (YFNIVLSILRIRSPEGRKKA) lie on the Cytoplasmic side of the membrane. Residues 238 to 258 (FSTCASHMIAVTVFYGTMLFM) form a helical membrane-spanning segment. The Extracellular portion of the chain corresponds to 259–271 (YLQPQTNHSLDTD). Asparagine 265 carries an N-linked (GlcNAc...) asparagine glycan. A helical membrane pass occupies residues 272 to 292 (KMASVFYTLVIPMLNPLIYSL). Residues 293 to 315 (RNNDVNVALKKFMENPCYSFKSM) are Cytoplasmic-facing.

This sequence belongs to the G-protein coupled receptor 1 family.

The protein localises to the cell membrane. In terms of biological role, odorant receptor. In Homo sapiens (Human), this protein is Olfactory receptor 8J3 (OR8J3).